Reading from the N-terminus, the 1381-residue chain is Regulator of G-protein signaling 12 (1381 aa).

The PDZ domain maps to 21–98 (SVEVARGRAG…VLHMVIAEGT (78 aa)). 2 positions are modified to phosphoserine: Ser171 and Ser194. Residue Lys195 forms a Glycyl lysine isopeptide (Lys-Gly) (interchain with G-Cter in SUMO2) linkage. A PID domain is found at 223–390 (SILNVAMVVG…VLQFISVLYR (168 aa)). Disordered stretches follow at residues 409–428 (ADAH…IGNF), 442–528 (LGGG…GAAG), and 620–644 (RKTK…SQRT). The span at 412-428 (HQNNSTSSNSDSGIGNF) shows a compositional bias: polar residues. Omega-N-methylarginine is present on residues Arg524 and Arg633. Phosphoserine is present on residues Ser661 and Ser671. The 118-residue stretch at 715–832 (SFERLLQDPV…LKSQLYQECV (118 aa)) folds into the RGS domain. The interval 842–942 (PDSQQVPSSP…ESQGSVSSAG (101 aa)) is disordered. Positions 849-869 (SSPASKHSISSDHSNVSTPKK) are enriched in low complexity. A phosphoserine mark is found at Ser850 and Ser879. The span at 914–923 (DHGDHAHDAP) shows a compositional bias: basic and acidic residues. Ser943 bears the Phosphoserine mark. 2 RBD domains span residues 962–1032 (KHCC…LEKR) and 1034–1104 (LFRL…LEER). Basic and acidic residues predominate over residues 1102 to 1117 (EERDPSRGKVSTDKQK). Residues 1102-1169 (EERDPSRGKV…RDPRLSKREE (68 aa)) are disordered. Polar residues predominate over residues 1122–1132 (KQNSAVNSSPR). The segment covering 1151–1169 (IRGENGKSARDPRLSKREE) has biased composition (basic and acidic residues). Residues 1187–1209 (AEEFFELISKAQSNRADDQRGLL) enclose the GoLoco domain. 2 disordered regions span residues 1227-1318 (SELA…QEGT) and 1347-1381 (LMGE…TSRF). The segment covering 1261-1280 (SDSPATSPASAQSPCSAYSP) has biased composition (low complexity). Over residues 1361–1381 (LPPPPTPQDTPGPPRPGTSRF) the composition is skewed to pro residues.

Interacts with GNAI1, GNAI2 and GNAI3; the interactions are GDP-dependent. As to expression, expressed in brain.

The protein resides in the nucleus. Its subcellular location is the cytoplasm. It localises to the cell projection. It is found in the dendrite. The protein localises to the synapse. In terms of biological role, regulates G protein-coupled receptor signaling cascades. Inhibits signal transduction by increasing the GTPase activity of G protein alpha subunits, thereby driving them into their inactive GDP-bound form. In Mus musculus (Mouse), this protein is Regulator of G-protein signaling 12 (Rgs12).